Reading from the N-terminus, the 591-residue chain is L-lactate dehydrogenase (cytochrome) (591 aa).

The N-terminal 80 residues, 1–80 (MLKYKPLLKI…LNWHNGQIDN (80 aa)), are a transit peptide targeting the mitochondrion. Residues 88-165 (KQKISPAEVA…APEKKLGPLQ (78 aa)) enclose the Cytochrome b5 heme-binding domain. The heme b site is built by histidine 123, histidine 146, tyrosine 177, glutamine 219, and tyrosine 223. The region spanning 197-563 (PPLDNIINLY…KPDLLDLSTL (367 aa)) is the FMN hydroxy acid dehydrogenase domain. Tyrosine 223 is a binding site for pyruvate. Residues 275–278 (SATA), serine 308, and glutamine 332 each bind FMN. Pyruvate is bound at residue tyrosine 334. Threonine 360 provides a ligand contact to FMN. Lysine 376 is a heme b binding site. Lysine 429 serves as a coordination point for FMN. 2 residues coordinate pyruvate: histidine 453 and arginine 456. Catalysis depends on histidine 453, which acts as the Proton acceptor. FMN-binding positions include 489–493 (DGGVR) and 512–513 (GR).

It in the N-terminal section; belongs to the cytochrome b5 family. This sequence in the C-terminal section; belongs to the FMN-dependent alpha-hydroxy acid dehydrogenase family. As to quaternary structure, homotetramer. It depends on FMN as a cofactor. Requires heme b as cofactor.

The protein localises to the mitochondrion intermembrane space. The enzyme catalyses (S)-lactate + 2 Fe(III)-[cytochrome c] = 2 Fe(II)-[cytochrome c] + pyruvate + 2 H(+). Its function is as follows. Catalyzes the oxidation of (S)-lactate (L-lactate) to pyruvate with subsequent transfer of electrons to cytochrome c. Is involved in the utilization of (S)-lactate as a sole source of carbon for growth. Can also use ferricyanide as an electron acceptor in vitro. The protein is L-lactate dehydrogenase (cytochrome) (CYB2) of Saccharomyces cerevisiae (strain ATCC 204508 / S288c) (Baker's yeast).